We begin with the raw amino-acid sequence, 601 residues long: Glutathione-regulated potassium-efflux system protein KefB (601 aa).

13 helical membrane passes run 4-24 (SDFLLAGVLFLFAAVAAVPLA), 29-49 (IGAVLGYLLAGIAIGPWGLGF), 55-75 (EILHFSELGVVFLMFIIGLEL), 87-107 (IFGVGAAQVLLSAALLAGLLM), 115-135 (AAVVGGIGLAMSSTAMALQLM), 152-172 (VLLFQDLAVIPALALVPLLAG), 177-197 (HFDWMKIGMKVLAFVGMLIGG), 207-227 (FIAASGVREVFTAATLLLVLG), 230-250 (LFMDALGLSMALGTFIAGVLL), 268-288 (GLLLGLFFISVGMSLNLGVLY), 291-311 (LLWVVISVVVLVAVKILVLYL), 324-344 (MQFAGVLSQGGEFAFVLFSTA), and 356-376 (ALLLVTVTLSMMTTPLLMKLV). The RCK N-terminal domain maps to 400–519 (KPQVIVVGFG…AGVTQFSRET (120 aa)).

The protein belongs to the monovalent cation:proton antiporter 2 (CPA2) transporter (TC 2.A.37) family. KefB subfamily. As to quaternary structure, interacts with the regulatory subunit KefG.

It is found in the cell inner membrane. Functionally, pore-forming subunit of a potassium efflux system that confers protection against electrophiles. Catalyzes K(+)/H(+) antiport. This chain is Glutathione-regulated potassium-efflux system protein KefB, found in Shigella sonnei (strain Ss046).